We begin with the raw amino-acid sequence, 266 residues long: Glutamate racemase 1 (266 aa).

Substrate contacts are provided by residues 11 to 12 (DS) and 43 to 44 (YG). Cys-74 acts as the Proton donor/acceptor in catalysis. 75–76 (NT) contributes to the substrate binding site. The Proton donor/acceptor role is filled by Cys-182. 183–184 (TH) contributes to the substrate binding site.

The protein belongs to the aspartate/glutamate racemases family.

It catalyses the reaction L-glutamate = D-glutamate. It functions in the pathway cell wall biogenesis; peptidoglycan biosynthesis. Functionally, provides the (R)-glutamate required for cell wall biosynthesis. The chain is Glutamate racemase 1 from Caldanaerobacter subterraneus subsp. tengcongensis (strain DSM 15242 / JCM 11007 / NBRC 100824 / MB4) (Thermoanaerobacter tengcongensis).